The chain runs to 129 residues: Large ribosomal subunit protein uL22 (129 aa).

Belongs to the universal ribosomal protein uL22 family. In terms of assembly, part of the 50S ribosomal subunit.

Functionally, this protein binds specifically to 23S rRNA; its binding is stimulated by other ribosomal proteins, e.g. L4, L17, and L20. It is important during the early stages of 50S assembly. It makes multiple contacts with different domains of the 23S rRNA in the assembled 50S subunit and ribosome. Its function is as follows. The globular domain of the protein is located near the polypeptide exit tunnel on the outside of the subunit, while an extended beta-hairpin is found that lines the wall of the exit tunnel in the center of the 70S ribosome. This chain is Large ribosomal subunit protein uL22, found in Bartonella quintana (strain Toulouse) (Rochalimaea quintana).